A 226-amino-acid chain; its full sequence is Leucyl/phenylalanyl-tRNA--protein transferase (226 aa).

This sequence belongs to the L/F-transferase family.

Its subcellular location is the cytoplasm. The enzyme catalyses N-terminal L-lysyl-[protein] + L-leucyl-tRNA(Leu) = N-terminal L-leucyl-L-lysyl-[protein] + tRNA(Leu) + H(+). It carries out the reaction N-terminal L-arginyl-[protein] + L-leucyl-tRNA(Leu) = N-terminal L-leucyl-L-arginyl-[protein] + tRNA(Leu) + H(+). It catalyses the reaction L-phenylalanyl-tRNA(Phe) + an N-terminal L-alpha-aminoacyl-[protein] = an N-terminal L-phenylalanyl-L-alpha-aminoacyl-[protein] + tRNA(Phe). Functions in the N-end rule pathway of protein degradation where it conjugates Leu, Phe and, less efficiently, Met from aminoacyl-tRNAs to the N-termini of proteins containing an N-terminal arginine or lysine. The protein is Leucyl/phenylalanyl-tRNA--protein transferase of Pseudomonas entomophila (strain L48).